The primary structure comprises 357 residues: D-alanine--D-alanine ligase (357 aa).

In terms of domain architecture, ATP-grasp spans 145–339 (KEVMLYHGIQ…YGDLVMDIVN (195 aa)). Residue 172–225 (PFDFPVVVKPTSGGSSVGTHIIHNQEELESGLEDVFRFDNSAIVEEFTPGREFS) participates in ATP binding. Mg(2+)-binding residues include D294, E306, and N308.

This sequence belongs to the D-alanine--D-alanine ligase family. Mg(2+) serves as cofactor. It depends on Mn(2+) as a cofactor.

Its subcellular location is the cytoplasm. The enzyme catalyses 2 D-alanine + ATP = D-alanyl-D-alanine + ADP + phosphate + H(+). The protein operates within cell wall biogenesis; peptidoglycan biosynthesis. In terms of biological role, cell wall formation. This chain is D-alanine--D-alanine ligase, found in Lacticaseibacillus paracasei (strain ATCC 334 / BCRC 17002 / CCUG 31169 / CIP 107868 / KCTC 3260 / NRRL B-441) (Lactobacillus paracasei).